The chain runs to 562 residues: MAASGFLLIASFMVVLFVLSRPLGGFLARLIEGEPFSALQKVEAGLWRCSGVKNAEMNGWQYALAILCFNLLGIVLLFVLLMAQGSLPLNPEHLPGMSWHLALNTAVSFVTNTNWQAYSGENTLSYLSQMAGLTVQNFLSAATGIAVAFALIRAFARHSATTLGNAWVDLVRITLYVLLPIALIIALIFVSQGVLQNLDGYLHITTLEGVQQTLPMGPVASQEAIKVLGTNGGGFFGANSAHPFENPTAFSNFVQMLAIFLIPCALCFAFGQVVGDNRQGHALIWAMSLIFIVAVVVVMYAELAGNPHLSPLGADSNSNMEGKESRFGILATSLYAVVTTAASCGAVNAMHDSFTALGGMIPLWLMQIGEVVFGGVGSGLYGMLLFVLLTVFIAGLMIGRTPEYLGKKIDVFDMKMTALAILVTPTIVLLGTALALCTEAGRAGILNPGAHGFSEVLYALSSAANNNGSAFAGLSVNTPFYNLLLAAAMFIGRFGVILPVLAIASSLVAKKRQPAGNGTLPTGGPLFIGLLIGTVLLVGALTFIPALALGPVAEHLQVWLAH.

Helical transmembrane passes span 6-26 (FLLIASFMVVLFVLSRPLGGF), 63-83 (ALAILCFNLLGIVLLFVLLMA), 132-152 (GLTVQNFLSAATGIAVAFALI), 175-195 (LYVLLPIALIIALIFVSQGVL), 253-273 (FVQMLAIFLIPCALCFAFGQV), 283-303 (LIWAMSLIFIVAVVVVMYAEL), 327-347 (FGILATSLYAVVTTAASCGAV), 356-376 (ALGGMIPLWLMQIGEVVFGGV), 379-399 (GLYGMLLFVLLTVFIAGLMIG), 416-436 (MTALAILVTPTIVLLGTALAL), 483-503 (LLLAAAMFIGRFGVILPVLAI), and 526-546 (LFIGLLIGTVLLVGALTFIPA).

This sequence belongs to the KdpA family. As to quaternary structure, the system is composed of three essential subunits: KdpA, KdpB and KdpC.

Its subcellular location is the cell inner membrane. Functionally, part of the high-affinity ATP-driven potassium transport (or Kdp) system, which catalyzes the hydrolysis of ATP coupled with the electrogenic transport of potassium into the cytoplasm. This subunit binds the periplasmic potassium ions and delivers the ions to the membrane domain of KdpB through an intramembrane tunnel. This chain is Potassium-transporting ATPase potassium-binding subunit, found in Yersinia pseudotuberculosis serotype O:1b (strain IP 31758).